The following is a 423-amino-acid chain: ER-bound oxygenase mpaB' (423 aa).

Residues 1–22 (MSLSLPPALSELARALPYSRTQ) are Lumenal-facing. A helical membrane pass occupies residues 23 to 41 (WLPILVGFLIGYPLLIKAL). At 42-423 (RYKRLGEMKK…ISRTGKCPFH (382 aa)) the chain is on the cytoplasmic side.

It belongs to the mpaB oxygenase family.

The protein resides in the endoplasmic reticulum membrane. The catalysed reaction is 4-farnesyl-3,5-dihydroxy-6-methylphthalide + AH2 + 2 O2 = (4E,8E)-10-(4,6-dihydroxy-7-methyl-3-oxo-1,3-dihydro-2-benzofuran-5-yl)-4,8-dimethyldeca-4,8-dienoate + acetone + A + H2O + H(+). Its pathway is secondary metabolite biosynthesis; terpenoid biosynthesis. In terms of biological role, ER-bound oxygenase; part of the gene cluster that mediates the biosynthesis of mycophenolic acid (MPA), the first isolated antibiotic natural product in the world obtained from a culture of Penicillium brevicompactum in 1893. MpaB' catalyzes the oxidative cleavage the C19-C20 double bond in farnesyl-DHMP (FDHMP) to yield FDHMP-3C via a mycophenolic aldehyde intermediate. The first step of the pathway is the synthesis of 5-methylorsellinic acid (5MOA) by the cytosolic polyketide synthase mpaC. 5MOA is then converted to the phthalide compound 5,7-dihydroxy-4,6-dimethylphthalide (DHMP) by the endoplasmic reticulum-bound cytochrome P450 monooxygenase mpaDE. MpaDE first catalyzes hydroxylation of 5-MOA to 4,6-dihydroxy-2-(hydroxymethyl)-3-methylbenzoic acid (DHMB). MpaDE then acts as a lactone synthase that catalyzes the ring closure to convert DHMB into DHMP. The next step is the prenylation of DHMP by the Golgi apparatus-associated prenyltransferase mpaA to yield farnesyl-DHMP (FDHMP). The ER-bound oxygenase mpaB then mediates the oxidative cleavage the C19-C20 double bond in FDHMP to yield FDHMP-3C via a mycophenolic aldehyde intermediate. The O-methyltransferase mpaG catalyzes the methylation of FDHMP-3C to yield MFDHMP-3C. After the cytosolic methylation of FDHMP-3C, MFDHMP-3C enters into peroxisomes probably via free diffusion due to its low molecular weight. Upon a peroxisomal CoA ligation reaction, catalyzed by a beta-oxidation component enzyme acyl-CoA ligase ACL891, MFDHMP-3C-CoA would then be restricted to peroxisomes for the following beta-oxidation pathway steps. The peroxisomal beta-oxidation machinery than converts MFDHMP-3C-CoA into MPA_CoA, via a beta-oxidation chain-shortening process. Finally mpaH acts as a peroxisomal acyl-CoA hydrolase with high substrate specificity toward MPA-CoA to release the final product MPA. This Penicillium brevicompactum protein is ER-bound oxygenase mpaB'.